The primary structure comprises 447 residues: GTPase Der (447 aa).

EngA-type G domains follow at residues 4 to 165 and 180 to 357; these read KIIT…SVEE and LQIV…KIWN. GTP contacts are provided by residues 10-17, 57-61, 119-122, 186-193, 233-237, and 298-301; these read GRPNVGKS, DTPGL, NKCE, GRPNAGKS, DTAGL, and NKWD. The region spanning 358–443 is the KH-like domain; sequence KKITTNKLNK…PIRFTYVKNK (86 aa).

This sequence belongs to the TRAFAC class TrmE-Era-EngA-EngB-Septin-like GTPase superfamily. EngA (Der) GTPase family. As to quaternary structure, associates with the 50S ribosomal subunit.

Its function is as follows. GTPase that plays an essential role in the late steps of ribosome biogenesis. The chain is GTPase Der from Rickettsia prowazekii (strain Madrid E).